A 940-amino-acid chain; its full sequence is Phosphoenolpyruvate carboxylase (940 aa).

Active-site residues include histidine 138 and lysine 603.

It belongs to the PEPCase type 1 family. Mg(2+) is required as a cofactor.

It catalyses the reaction oxaloacetate + phosphate = phosphoenolpyruvate + hydrogencarbonate. In terms of biological role, forms oxaloacetate, a four-carbon dicarboxylic acid source for the tricarboxylic acid cycle. The sequence is that of Phosphoenolpyruvate carboxylase from Streptococcus thermophilus (strain ATCC BAA-491 / LMD-9).